Consider the following 430-residue polypeptide: tRNA(Ile)-lysidine synthase (430 aa).

21-26 (SGGLDS) is a binding site for ATP.

It belongs to the tRNA(Ile)-lysidine synthase family.

It is found in the cytoplasm. The enzyme catalyses cytidine(34) in tRNA(Ile2) + L-lysine + ATP = lysidine(34) in tRNA(Ile2) + AMP + diphosphate + H(+). Functionally, ligates lysine onto the cytidine present at position 34 of the AUA codon-specific tRNA(Ile) that contains the anticodon CAU, in an ATP-dependent manner. Cytidine is converted to lysidine, thus changing the amino acid specificity of the tRNA from methionine to isoleucine. This chain is tRNA(Ile)-lysidine synthase, found in Salmonella paratyphi A (strain ATCC 9150 / SARB42).